A 382-amino-acid polypeptide reads, in one-letter code: Nitric oxide reductase FlRd-NAD(+) reductase (382 aa).

It belongs to the FAD-dependent oxidoreductase family. FAD is required as a cofactor.

The protein resides in the cytoplasm. It catalyses the reaction 2 reduced [nitric oxide reductase rubredoxin domain] + NAD(+) + H(+) = 2 oxidized [nitric oxide reductase rubredoxin domain] + NADH. It functions in the pathway nitrogen metabolism; nitric oxide reduction. Functionally, one of at least two accessory proteins for anaerobic nitric oxide (NO) reductase. Reduces the rubredoxin moiety of NO reductase. The chain is Nitric oxide reductase FlRd-NAD(+) reductase from Vibrio vulnificus (strain CMCP6).